A 303-amino-acid chain; its full sequence is Aliphatic sulfonates import ATP-binding protein SsuB (303 aa).

An ABC transporter domain is found at 39–263; that stretch reads LHVRQVVKRY…ERGAAGFAQL (225 aa). 71 to 78 contributes to the ATP binding site; the sequence is GRSGCGKS.

It belongs to the ABC transporter superfamily. Aliphatic sulfonates importer (TC 3.A.1.17.2) family. As to quaternary structure, the complex is composed of two ATP-binding proteins (SsuB), two transmembrane proteins (SsuC) and a solute-binding protein (SsuA).

Its subcellular location is the cell inner membrane. The enzyme catalyses ATP + H2O + aliphatic sulfonate-[sulfonate-binding protein]Side 1 = ADP + phosphate + aliphatic sulfonateSide 2 + [sulfonate-binding protein]Side 1.. Functionally, part of the ABC transporter complex SsuABC involved in aliphatic sulfonates import. Responsible for energy coupling to the transport system. The sequence is that of Aliphatic sulfonates import ATP-binding protein SsuB from Cupriavidus necator (strain ATCC 17699 / DSM 428 / KCTC 22496 / NCIMB 10442 / H16 / Stanier 337) (Ralstonia eutropha).